The sequence spans 392 residues: Gastricsin (392 aa).

The first 16 residues, 1–16, serve as a signal peptide directing secretion; it reads MKWMVVALLCLPLLEA. Positions 17–62 are cleaved as a propeptide — activation peptide; it reads SLLRVPLRKMKSIRETMKEQGVLKDFLKTHKYDPGQKYHFGNFGDY. In terms of domain architecture, Peptidase A1 spans 76–389; it reads YFGEISIGTP…DMGNNKVGLA (314 aa). Asp-94 is a catalytic residue. Disulfide bonds link Cys-107/Cys-112 and Cys-270/Cys-275. Asp-280 is an active-site residue. Cysteines 314 and 347 form a disulfide.

Belongs to the peptidase A1 family.

It localises to the secreted. The catalysed reaction is More restricted specificity than pepsin A, but shows preferential cleavage at Tyr-|-Xaa bonds. High activity on hemoglobin.. Functionally, hydrolyzes a variety of proteins. The sequence is that of Gastricsin (Pgc) from Rattus norvegicus (Rat).